We begin with the raw amino-acid sequence, 154 residues long: Small ribosomal subunit protein uS13 (154 aa).

It belongs to the universal ribosomal protein uS13 family.

Its subcellular location is the cytoplasm. In terms of biological role, located at the top of the head of the 40S subunit, it contacts several helices of the 18S rRNA. The polypeptide is Small ribosomal subunit protein uS13 (rps18) (Dictyostelium discoideum (Social amoeba)).